Reading from the N-terminus, the 461-residue chain is Phosphomethylpyrimidine synthase (461 aa).

Substrate is bound by residues Asn81, Met110, Tyr140, His176, 196 to 198, 237 to 240, and Glu276; these read SRG and DSLR. His280 lines the Zn(2+) pocket. Substrate is bound at residue Tyr303. His344 is a binding site for Zn(2+). Residues Cys424, Cys427, and Cys432 each contribute to the [4Fe-4S] cluster site.

The protein belongs to the ThiC family. It depends on [4Fe-4S] cluster as a cofactor.

It catalyses the reaction 5-amino-1-(5-phospho-beta-D-ribosyl)imidazole + S-adenosyl-L-methionine = 4-amino-2-methyl-5-(phosphooxymethyl)pyrimidine + CO + 5'-deoxyadenosine + formate + L-methionine + 3 H(+). The protein operates within cofactor biosynthesis; thiamine diphosphate biosynthesis. In terms of biological role, catalyzes the synthesis of the hydroxymethylpyrimidine phosphate (HMP-P) moiety of thiamine from aminoimidazole ribotide (AIR) in a radical S-adenosyl-L-methionine (SAM)-dependent reaction. The polypeptide is Phosphomethylpyrimidine synthase (Thermosynechococcus vestitus (strain NIES-2133 / IAM M-273 / BP-1)).